Here is a 113-residue protein sequence, read N- to C-terminus: Putative membrane protein insertion efficiency factor (113 aa).

Belongs to the UPF0161 family.

Its subcellular location is the cell inner membrane. In terms of biological role, could be involved in insertion of integral membrane proteins into the membrane. This Campylobacter concisus (strain 13826) protein is Putative membrane protein insertion efficiency factor.